Here is a 336-residue protein sequence, read N- to C-terminus: Inactive serine/threonine-protein kinase PLK5 (336 aa).

The Protein kinase; truncated domain maps to 1–65; it reads MYTVLTGTPP…LDHLLQDDFF (65 aa). Disordered regions lie at residues 109–135 and 224–245; these read PCPF…WDGE and GRTG…LPTP. In terms of domain architecture, POLO box spans 255–336; that stretch reads LLRFLASEHA…HHALRMLQSI (82 aa).

This sequence belongs to the protein kinase superfamily. Ser/Thr protein kinase family. CDC5/Polo subfamily. As to expression, expressed in the brain, neurons and glial cells. Also expressed in highly differentiated cells, such as the serous acini in the parotid gland, distal and proximal tubules of the kidney, tubules of the seminal gland, Kupffer cells and some hepatocytes in the liver, and some cells in the germinal center of lymph nodes (at protein level).

The protein localises to the nucleus. It localises to the nucleolus. The protein resides in the cytoplasm. Its function is as follows. Inactive serine/threonine-protein kinase that plays a role in cell cycle progression and neuronal differentiation. The chain is Inactive serine/threonine-protein kinase PLK5 (PLK5) from Homo sapiens (Human).